Reading from the N-terminus, the 74-residue chain is Putative membrane protein insertion efficiency factor (74 aa).

Belongs to the UPF0161 family.

It is found in the cell membrane. In terms of biological role, could be involved in insertion of integral membrane proteins into the membrane. The chain is Putative membrane protein insertion efficiency factor from Anoxybacillus flavithermus (strain DSM 21510 / WK1).